The sequence spans 306 residues: F-box/LRR-repeat protein At3g26922 (306 aa).

The F-box domain maps to 13–73; it reads EDRISDLPEA…QSEDETYSEI (61 aa). 6 LRR repeats span residues 67-93, 98-122, 138-170, 171-196, 215-243, and 263-288; these read DETYSEIVCRLLLSNKAPFLESLHLGF, CRSVEVGMWIGIAYARHVRDLVLHV, CETLESLTLRSWVLVDVPSPACLKSLRTLRLEN, VDYKYDDSVYNLLSGCPNLENLVVYR, LTIYDDNDGEYCTGYVINAPSLKYLKIDG, and IMNVSKIINEKLLETLTSVKRLSLAL.

The sequence is that of F-box/LRR-repeat protein At3g26922 from Arabidopsis thaliana (Mouse-ear cress).